We begin with the raw amino-acid sequence, 176 residues long: Lipoprotein signal peptidase (176 aa).

A run of 4 helical transmembrane segments spans residues Leu-10–Leu-30, Val-48–Phe-68, Tyr-78–Met-98, and Met-102–Asp-122. Active-site residues include Asp-131 and Asp-149. A helical transmembrane segment spans residues His-141–Ile-161.

Belongs to the peptidase A8 family.

It is found in the cell inner membrane. The enzyme catalyses Release of signal peptides from bacterial membrane prolipoproteins. Hydrolyzes -Xaa-Yaa-Zaa-|-(S,diacylglyceryl)Cys-, in which Xaa is hydrophobic (preferably Leu), and Yaa (Ala or Ser) and Zaa (Gly or Ala) have small, neutral side chains.. The protein operates within protein modification; lipoprotein biosynthesis (signal peptide cleavage). In terms of biological role, this protein specifically catalyzes the removal of signal peptides from prolipoproteins. The chain is Lipoprotein signal peptidase from Acinetobacter baumannii (strain ATCC 17978 / DSM 105126 / CIP 53.77 / LMG 1025 / NCDC KC755 / 5377).